The chain runs to 237 residues: MSIHISAKPGEIADKILLPGDPLRAKFIAENFLEDAVCFNEVRNMFGYTGTYKGHRVSVMGTGMGIPSISIYAHELINEYGVKKLIRVGTAGSLNEDVHVRELVLAQAAATNSRMINIDWPEYDLPQIADFDLLDKAYHIAKELNMTTHVGNVLSSDSFYSPKLFSRNLELGQLGVKAVEMEAAALYYLGAKFGVQTLAIMTISDSLVNPEEDTTAEERQNTFTDMMKVGLETLIAE.

Histidine 4 provides a ligand contact to a purine D-ribonucleoside. Residues glycine 20, arginine 24, arginine 43, and arginine 87–threonine 90 each bind phosphate. A purine D-ribonucleoside is bound by residues glutamate 180–glutamate 182 and serine 204–aspartate 205. The active-site Proton donor is aspartate 205.

It belongs to the PNP/UDP phosphorylase family. As to quaternary structure, homohexamer; trimer of homodimers.

It carries out the reaction a purine D-ribonucleoside + phosphate = a purine nucleobase + alpha-D-ribose 1-phosphate. The enzyme catalyses a purine 2'-deoxy-D-ribonucleoside + phosphate = a purine nucleobase + 2-deoxy-alpha-D-ribose 1-phosphate. Functionally, catalyzes the reversible phosphorolytic breakdown of the N-glycosidic bond in the beta-(deoxy)ribonucleoside molecules, with the formation of the corresponding free purine bases and pentose-1-phosphate. In Streptococcus suis (strain 98HAH33), this protein is Purine nucleoside phosphorylase DeoD-type.